The chain runs to 450 residues: UDP-N-acetylmuramoylalanine--D-glutamate ligase (450 aa).

119–125 serves as a coordination point for ATP; sequence GSNGKTT.

Belongs to the MurCDEF family.

It is found in the cytoplasm. It carries out the reaction UDP-N-acetyl-alpha-D-muramoyl-L-alanine + D-glutamate + ATP = UDP-N-acetyl-alpha-D-muramoyl-L-alanyl-D-glutamate + ADP + phosphate + H(+). It functions in the pathway cell wall biogenesis; peptidoglycan biosynthesis. Its function is as follows. Cell wall formation. Catalyzes the addition of glutamate to the nucleotide precursor UDP-N-acetylmuramoyl-L-alanine (UMA). The chain is UDP-N-acetylmuramoylalanine--D-glutamate ligase from Streptococcus pneumoniae serotype 19F (strain G54).